A 441-amino-acid chain; its full sequence is Glutamate-1-semialdehyde 2,1-aminomutase (441 aa).

Lys-275 carries the N6-(pyridoxal phosphate)lysine modification.

The protein belongs to the class-III pyridoxal-phosphate-dependent aminotransferase family. HemL subfamily. In terms of assembly, homodimer. It depends on pyridoxal 5'-phosphate as a cofactor.

The protein localises to the cytoplasm. It catalyses the reaction (S)-4-amino-5-oxopentanoate = 5-aminolevulinate. It participates in porphyrin-containing compound metabolism; protoporphyrin-IX biosynthesis; 5-aminolevulinate from L-glutamyl-tRNA(Glu): step 2/2. This Deinococcus deserti (strain DSM 17065 / CIP 109153 / LMG 22923 / VCD115) protein is Glutamate-1-semialdehyde 2,1-aminomutase.